The sequence spans 489 residues: MRFSLSSADLQEWNGDVLAVGLPQGDVDATATALEQRFAGITDALKQQEFKGKPGDQLVITPLGGGPQRLVVLGLGESDAIDTERLRGAAARAAKAAIGCEGSLGLQLPCAGSDAQEAARICAEAVRLCLYKDQRFRKEPDPRRIPEALELIDLSPAAESGFAAVNATCAGVELARELVAAPPNVVTPAALADTAAGIAKDHGLELKVLERSDCEAKGMGAFLAVSQGSDLPPKFIHLIYRPEGEVKRRVALVGKGLTFDSGGYNLKVGAAQIDMMKFDMGGSAAVLGAMRSIAELKPAGVEVHMVVASCENMVNGSAVHPGDIVMAANGMTIEINNTDAEGRLTLADALLYACEQKPDAVVDLATLTGACVIALGDEMAGLWSNNDDLAEALDAAAQTGGEGLWRMPLRQSYKDGLKSLLADMKNTGPRPGGSITAALFLKEFVAKDTAWAHIDIAGPVWSDKGKGVNPAGATGYGVRTLVNWVLAQS.

Positions 255 and 260 each coordinate Mn(2+). The active site involves lysine 267. Residues aspartate 279, aspartate 339, and glutamate 341 each contribute to the Mn(2+) site. Arginine 343 is a catalytic residue.

The protein belongs to the peptidase M17 family. Requires Mn(2+) as cofactor.

The protein localises to the cytoplasm. It carries out the reaction Release of an N-terminal amino acid, Xaa-|-Yaa-, in which Xaa is preferably Leu, but may be other amino acids including Pro although not Arg or Lys, and Yaa may be Pro. Amino acid amides and methyl esters are also readily hydrolyzed, but rates on arylamides are exceedingly low.. The catalysed reaction is Release of an N-terminal amino acid, preferentially leucine, but not glutamic or aspartic acids.. Its function is as follows. Presumably involved in the processing and regular turnover of intracellular proteins. Catalyzes the removal of unsubstituted N-terminal amino acids from various peptides. This Synechococcus sp. (strain CC9605) protein is Probable cytosol aminopeptidase.